The following is a 266-amino-acid chain: Glutamate racemase (266 aa).

Substrate-binding positions include Asp-7–Ser-8 and Tyr-39–Gly-40. The Proton donor/acceptor role is filled by Cys-70. Substrate is bound at residue Asn-71–Thr-72. Cys-186 acts as the Proton donor/acceptor in catalysis. Substrate is bound at residue Thr-187 to His-188.

It belongs to the aspartate/glutamate racemases family.

It carries out the reaction L-glutamate = D-glutamate. It participates in cell wall biogenesis; peptidoglycan biosynthesis. Provides the (R)-glutamate required for cell wall biosynthesis. The polypeptide is Glutamate racemase (Campylobacter curvus (strain 525.92)).